We begin with the raw amino-acid sequence, 163 residues long: Cyclic pyranopterin monophosphate synthase (163 aa).

Residues 75–77 (MCH) and 113–114 (ME) each bind substrate. Asp-128 is an active-site residue.

It belongs to the MoaC family. In terms of assembly, homohexamer; trimer of dimers.

It catalyses the reaction (8S)-3',8-cyclo-7,8-dihydroguanosine 5'-triphosphate = cyclic pyranopterin phosphate + diphosphate. Its pathway is cofactor biosynthesis; molybdopterin biosynthesis. Its function is as follows. Catalyzes the conversion of (8S)-3',8-cyclo-7,8-dihydroguanosine 5'-triphosphate to cyclic pyranopterin monophosphate (cPMP). This chain is Cyclic pyranopterin monophosphate synthase, found in Desulforapulum autotrophicum (strain ATCC 43914 / DSM 3382 / VKM B-1955 / HRM2) (Desulfobacterium autotrophicum).